We begin with the raw amino-acid sequence, 182 residues long: MAANRGSRTFLSVFLLCCWQGAELQPIKTTSGPITEGSLNSTTENIPEALDEILAQEILEPKTSAVSETSPRPRSSILTTVQTKEINAGIDENYQEEAFENYHEVLENIEHLPTKEESGKNDRSTVANLHDHSSQTKHEPPSSPEGKGSSNDDVYGKLSVLDKILENIGQSEGSLELTESIF.

Residues 1–24 (MAANRGSRTFLSVFLLCCWQGAEL) form the signal peptide. N40 carries an N-linked (GlcNAc...) asparagine glycan. Residues 112–140 (LPTKEESGKNDRSTVANLHDHSSQTKHEP) are compositionally biased toward basic and acidic residues. The segment at 112–154 (LPTKEESGKNDRSTVANLHDHSSQTKHEPPSSPEGKGSSNDDV) is disordered.

In terms of tissue distribution, testis-specific. Expressed in zygotene and pachytene spermatocytes, round spermatids, elongating spermatids and spermatozoa (at protein level). Testis-specific.

The protein resides in the secreted. It is found in the cytoplasmic vesicle. Its subcellular location is the secretory vesicle. It localises to the acrosome lumen. In terms of biological role, involved in fertilization. Seems not to play a direct role in sperm-egg binding or gamete fusion. The protein is Sperm acrosome-associated protein 7 of Mus musculus (Mouse).